The sequence spans 196 residues: Ribonuclease HII (196 aa).

One can recognise an RNase H type-2 domain in the interval 15–196 (YIVAGIDEAG…RKSFRYSCFI (182 aa)). Residues Asp-21, Glu-22, and Asp-112 each coordinate a divalent metal cation.

It belongs to the RNase HII family. Mn(2+) is required as a cofactor. It depends on Mg(2+) as a cofactor.

The protein localises to the cytoplasm. The catalysed reaction is Endonucleolytic cleavage to 5'-phosphomonoester.. Its function is as follows. Endonuclease that specifically degrades the RNA of RNA-DNA hybrids. This chain is Ribonuclease HII, found in Rickettsia canadensis (strain McKiel).